A 242-amino-acid polypeptide reads, in one-letter code: Large ribosomal subunit protein uL3 (242 aa).

An N5-methylglutamine modification is found at Gln-151.

This sequence belongs to the universal ribosomal protein uL3 family. Part of the 50S ribosomal subunit. Forms a cluster with proteins L14 and L19. In terms of processing, methylated by PrmB.

In terms of biological role, one of the primary rRNA binding proteins, it binds directly near the 3'-end of the 23S rRNA, where it nucleates assembly of the 50S subunit. The protein is Large ribosomal subunit protein uL3 of Zymomonas mobilis subsp. mobilis (strain ATCC 31821 / ZM4 / CP4).